We begin with the raw amino-acid sequence, 644 residues long: Leucine-rich repeat protein soc-2 homolog (644 aa).

A compositionally biased stretch (low complexity) spans 1 to 19 (MNLCSSGATASTTSLSSTG). Disordered regions lie at residues 1–60 (MNLC…APTL) and 82–150 (NSPA…IQAD). Composition is skewed to gly residues over residues 26-50 (GVPG…GGKA) and 87-96 (GAGGASGFTG). The span at 99 to 117 (QQPTGSNGHSHLHNENNAN) shows a compositional bias: polar residues. LRR repeat units follow at residues 164 to 185 (GIKR…VKEC), 187 to 208 (HLTE…IGCL), 210 to 231 (SLRN…LQNC), 233 to 254 (QLKV…IYRL), 256 to 277 (SLTT…LRQL), 279 to 300 (NLTM…IGAL), 302 to 323 (NLTT…IGNC), 325 to 346 (NLSA…IGNL), 348 to 370 (SLVR…KNCK), 371 to 392 (SMDE…MLAS), 395 to 416 (GLTT…GPAQ), 419 to 440 (NVYS…IFSR), 443 to 464 (GLTK…IGTW), 466 to 487 (NMVE…IMNL), 489 to 510 (NLEI…IGNL), 512 to 533 (RLRI…IGLL), 535 to 556 (ELQR…IGHL), 558 to 579 (NLTH…IGSL), 581 to 603 (SLEN…LALC), and 605 to 626 (NLKY…IQAG).

It belongs to the SHOC2 family.

In terms of biological role, acts as a Ras effector and participates in MAPK pathway activation. Probably acts as a regulatory subunit of protein phosphatase that specifically dephosphorylates Raf kinase and stimulate Raf activity at specialized signaling complexes upon Ras activation. This is Leucine-rich repeat protein soc-2 homolog (Sur-8) from Drosophila erecta (Fruit fly).